The primary structure comprises 183 residues: Alkyl hydroperoxide reductase AhpD (183 aa).

The active-site Proton donor is Cys132. Cysteines 132 and 135 form a disulfide. The Cysteine sulfenic acid (-SOH) intermediate role is filled by Cys135.

Belongs to the AhpD family.

The catalysed reaction is N(6)-[(R)-dihydrolipoyl]-L-lysyl-[lipoyl-carrier protein] + a hydroperoxide = N(6)-[(R)-lipoyl]-L-lysyl-[lipoyl-carrier protein] + an alcohol + H2O. Antioxidant protein with alkyl hydroperoxidase activity. Required for the reduction of the AhpC active site cysteine residues and for the regeneration of the AhpC enzyme activity. The chain is Alkyl hydroperoxide reductase AhpD from Caulobacter vibrioides (strain ATCC 19089 / CIP 103742 / CB 15) (Caulobacter crescentus).